The primary structure comprises 775 residues: Phosphoribosylformylglycinamidine synthase subunit PurL (775 aa).

The active site involves histidine 81. 2 residues coordinate ATP: tyrosine 84 and lysine 123. Glutamate 125 is a binding site for Mg(2+). Substrate-binding positions include 126-129 and arginine 148; that span reads SHNH. Histidine 127 acts as the Proton acceptor in catalysis. Aspartate 149 is a Mg(2+) binding site. A substrate-binding site is contributed by glutamine 272. A Mg(2+)-binding site is contributed by aspartate 300. Residue 344-346 coordinates substrate; that stretch reads ESQ. The ATP site is built by aspartate 525 and glycine 562. Residue asparagine 563 coordinates Mg(2+). Serine 565 contacts substrate.

It belongs to the FGAMS family. Monomer. Part of the FGAM synthase complex composed of 1 PurL, 1 PurQ and 2 PurS subunits.

It is found in the cytoplasm. The catalysed reaction is N(2)-formyl-N(1)-(5-phospho-beta-D-ribosyl)glycinamide + L-glutamine + ATP + H2O = 2-formamido-N(1)-(5-O-phospho-beta-D-ribosyl)acetamidine + L-glutamate + ADP + phosphate + H(+). The protein operates within purine metabolism; IMP biosynthesis via de novo pathway; 5-amino-1-(5-phospho-D-ribosyl)imidazole from N(2)-formyl-N(1)-(5-phospho-D-ribosyl)glycinamide: step 1/2. Part of the phosphoribosylformylglycinamidine synthase complex involved in the purines biosynthetic pathway. Catalyzes the ATP-dependent conversion of formylglycinamide ribonucleotide (FGAR) and glutamine to yield formylglycinamidine ribonucleotide (FGAM) and glutamate. The FGAM synthase complex is composed of three subunits. PurQ produces an ammonia molecule by converting glutamine to glutamate. PurL transfers the ammonia molecule to FGAR to form FGAM in an ATP-dependent manner. PurS interacts with PurQ and PurL and is thought to assist in the transfer of the ammonia molecule from PurQ to PurL. The protein is Phosphoribosylformylglycinamidine synthase subunit PurL of Agrobacterium fabrum (strain C58 / ATCC 33970) (Agrobacterium tumefaciens (strain C58)).